A 546-amino-acid polypeptide reads, in one-letter code: G1/S-specific cyclin CLN1 (546 aa).

Residues 224–265 (SNGKEWSCKRKSQSSDDSDATVEEHISSSPQSTGLDGDTTTM) form a disordered region.

It belongs to the cyclin family.

In terms of biological role, essential for the control of the cell cycle at the G1/S (start) transition. Interacts with the CDC28 protein kinase to form MPF. The polypeptide is G1/S-specific cyclin CLN1 (CLN1) (Saccharomyces cerevisiae (strain ATCC 204508 / S288c) (Baker's yeast)).